Consider the following 377-residue polypeptide: Alanine racemase (377 aa).

Lys37 acts as the Proton acceptor; specific for D-alanine in catalysis. N6-(pyridoxal phosphate)lysine is present on Lys37. Arg135 provides a ligand contact to substrate. The Proton acceptor; specific for L-alanine role is filled by Tyr271. Met319 contacts substrate.

This sequence belongs to the alanine racemase family. Pyridoxal 5'-phosphate is required as a cofactor.

It carries out the reaction L-alanine = D-alanine. It functions in the pathway amino-acid biosynthesis; D-alanine biosynthesis; D-alanine from L-alanine: step 1/1. Its function is as follows. Catalyzes the interconversion of L-alanine and D-alanine. May also act on other amino acids. The sequence is that of Alanine racemase (alr) from Helicobacter pylori (strain J99 / ATCC 700824) (Campylobacter pylori J99).